Consider the following 135-residue polypeptide: MNYFLKAPILGFEHINEVRLEKIDSLFSRLISQTNSPMALDMVLVNPYCLREYSFVIPKYIELLLELDSHSKVEVYCVVVLQKNLEDSMVNFLAPLVFNSKNGFGAQVALSMMDYPDFGFRDPLKSFVIQERERA.

This sequence belongs to the FliW family. In terms of assembly, interacts with translational regulator CsrA and flagellin(s).

It is found in the cytoplasm. In terms of biological role, acts as an anti-CsrA protein, binds CsrA and prevents it from repressing translation of its target genes, one of which is flagellin. Binds to flagellin and participates in the assembly of the flagellum. This is Flagellar assembly factor FliW 1 from Helicobacter pylori (strain ATCC 700392 / 26695) (Campylobacter pylori).